The sequence spans 109 residues: Small ribosomal subunit protein uS17 (109 aa).

The protein belongs to the universal ribosomal protein uS17 family. In terms of assembly, part of the 30S ribosomal subunit.

Functionally, one of the primary rRNA binding proteins, it binds specifically to the 5'-end of 16S ribosomal RNA. This chain is Small ribosomal subunit protein uS17, found in Thermoplasma acidophilum (strain ATCC 25905 / DSM 1728 / JCM 9062 / NBRC 15155 / AMRC-C165).